Reading from the N-terminus, the 642-residue chain is Ribosome biogenesis protein BOP1 homolog (642 aa).

The segment at 1-28 (MIHKRMNSTELERTSKKIDDYDSSDEED) is disordered. The span at 10 to 20 (ELERTSKKIDD) shows a compositional bias: basic and acidic residues. WD repeat units follow at residues 311 to 351 (GHSG…CLKT), 353 to 393 (SLDG…DRHR), 472 to 510 (RLKGLMTVLSFHPSEPFLFVGTQRYIRIYDLAKCQLKKK), 513 to 552 (TGSQWMSCMHVDFRGDNVFVGGHDRVFSWIDLQLSSKPWK), 556 to 595 (HHTAAIRGVTQHARCPLIATVSDDSTAIVYYARISSDSLK), and 612 to 642 (KNGLSILAAIFHPSQPWLITAHVDGSIALFT).

Belongs to the WD repeat BOP1/ERB1 family.

Its subcellular location is the nucleus. It localises to the nucleolus. The protein localises to the nucleoplasm. Its function is as follows. Required for maturation of ribosomal RNAs and formation of the large ribosomal subunit. This chain is Ribosome biogenesis protein BOP1 homolog, found in Brugia malayi (Filarial nematode worm).